The chain runs to 273 residues: Proteasome subunit alpha (273 aa).

The interval 231 to 273 (DDGAAGQPPSSSDTDTSAAEARKPTASAGSADLEGPEPERPDS) is disordered. Over residues 238 to 249 (PPSSSDTDTSAA) the composition is skewed to low complexity.

Belongs to the peptidase T1A family. In terms of assembly, the 20S proteasome core is composed of 14 alpha and 14 beta subunits that assemble into four stacked heptameric rings, resulting in a barrel-shaped structure. The two inner rings, each composed of seven catalytic beta subunits, are sandwiched by two outer rings, each composed of seven alpha subunits. The catalytic chamber with the active sites is on the inside of the barrel. Has a gated structure, the ends of the cylinder being occluded by the N-termini of the alpha-subunits. Is capped by the proteasome-associated ATPase, ARC.

Its subcellular location is the cytoplasm. The protein operates within protein degradation; proteasomal Pup-dependent pathway. Its activity is regulated as follows. The formation of the proteasomal ATPase ARC-20S proteasome complex, likely via the docking of the C-termini of ARC into the intersubunit pockets in the alpha-rings, may trigger opening of the gate for substrate entry. Interconversion between the open-gate and close-gate conformations leads to a dynamic regulation of the 20S proteasome proteolysis activity. Its function is as follows. Component of the proteasome core, a large protease complex with broad specificity involved in protein degradation. The protein is Proteasome subunit alpha of Salinispora arenicola (strain CNS-205).